Consider the following 142-residue polypeptide: Phosphoribosyl-AMP cyclohydrolase (142 aa).

Position 92 (aspartate 92) interacts with Mg(2+). Cysteine 93 provides a ligand contact to Zn(2+). Residues aspartate 94 and aspartate 96 each coordinate Mg(2+). Residues cysteine 109 and cysteine 116 each contribute to the Zn(2+) site.

This sequence belongs to the PRA-CH family. As to quaternary structure, homodimer. The cofactor is Mg(2+). Requires Zn(2+) as cofactor.

Its subcellular location is the cytoplasm. The catalysed reaction is 1-(5-phospho-beta-D-ribosyl)-5'-AMP + H2O = 1-(5-phospho-beta-D-ribosyl)-5-[(5-phospho-beta-D-ribosylamino)methylideneamino]imidazole-4-carboxamide. It functions in the pathway amino-acid biosynthesis; L-histidine biosynthesis; L-histidine from 5-phospho-alpha-D-ribose 1-diphosphate: step 3/9. In terms of biological role, catalyzes the hydrolysis of the adenine ring of phosphoribosyl-AMP. This chain is Phosphoribosyl-AMP cyclohydrolase, found in Halorhodospira halophila (strain DSM 244 / SL1) (Ectothiorhodospira halophila (strain DSM 244 / SL1)).